The following is a 367-amino-acid chain: Pyrimidine monooxygenase RutA (367 aa).

FMN contacts are provided by residues 49–50 (IK), N115, E124, 140–141 (RY), and S190.

The protein belongs to the NtaA/SnaA/DszA monooxygenase family. RutA subfamily.

The enzyme catalyses uracil + FMNH2 + NADH + O2 = (Z)-3-ureidoacrylate + FMN + NAD(+) + H2O + H(+). The catalysed reaction is thymine + FMNH2 + NADH + O2 = (Z)-2-methylureidoacrylate + FMN + NAD(+) + H2O + H(+). Functionally, catalyzes the pyrimidine ring opening between N-3 and C-4 by an unusual flavin hydroperoxide-catalyzed mechanism, adding oxygen atoms in the process to yield ureidoacrylate peracid, that immediately reacts with FMN forming ureidoacrylate and FMN-N(5)-oxide. The FMN-N(5)-oxide reacts spontaneously with NADH to produce FMN. Requires the flavin reductase RutF to regenerate FMN in vivo. The chain is Pyrimidine monooxygenase RutA from Yersinia enterocolitica serotype O:8 / biotype 1B (strain NCTC 13174 / 8081).